Reading from the N-terminus, the 636-residue chain is Molybdenum cofactor biosynthesis protein 1 (636 aa).

The tract at residues 1 to 383 (MAARPLSRML…QMKNRPMILI (383 aa)) is molybdenum cofactor biosynthesis protein A. A Phosphoserine modification is found at Ser-64. In terms of domain architecture, Radical SAM core spans 64 to 277 (SFGRQHSYLR…LDTVRQQWPE (214 aa)). Arg-73 lines the GTP pocket. Residues Cys-80 and Cys-84 each contribute to the [4Fe-4S] cluster site. Tyr-86 serves as a coordination point for S-adenosyl-L-methionine. Cys-87 lines the [4Fe-4S] cluster pocket. Position 123 (Arg-123) interacts with GTP. Gly-127 provides a ligand contact to S-adenosyl-L-methionine. Thr-154 is a binding site for GTP. Ser-178 is a binding site for S-adenosyl-L-methionine. At Lys-198 the chain carries N6-acetyllysine. Lys-215 is a GTP binding site. Met-249 lines the S-adenosyl-L-methionine pocket. The [4Fe-4S] cluster site is built by Cys-312 and Cys-315. 317–319 (RLR) is a binding site for GTP. Cys-329 is a [4Fe-4S] cluster binding site. The tract at residues 414–636 (MSFSSQVATL…GGQRGDFHRA (223 aa)) is molybdenum cofactor biosynthesis protein C. The segment at 456–480 (DANSKCLSPGSWASAAPSGPQLTSE) is disordered. Low complexity predominate over residues 463 to 475 (SPGSWASAAPSGP). At Lys-528 the chain carries N6-acetyllysine. Catalysis depends on Asp-606, which acts as the For molybdenum cofactor biosynthesis protein C activity.

It in the C-terminal section; belongs to the MoaC family. The protein in the N-terminal section; belongs to the radical SAM superfamily. MoaA family. Isoform MOCS1A and isoform MOCS1B probably form a heterooligomer. [4Fe-4S] cluster serves as cofactor. Isoform MOCS1A and isoform 2 are widely expressed.

The enzyme catalyses GTP + AH2 + S-adenosyl-L-methionine = (8S)-3',8-cyclo-7,8-dihydroguanosine 5'-triphosphate + 5'-deoxyadenosine + L-methionine + A + H(+). It carries out the reaction (8S)-3',8-cyclo-7,8-dihydroguanosine 5'-triphosphate = cyclic pyranopterin phosphate + diphosphate. It functions in the pathway cofactor biosynthesis; molybdopterin biosynthesis. In terms of biological role, isoform MOCS1A and isoform MOCS1B probably form a complex that catalyzes the conversion of 5'-GTP to cyclic pyranopterin monophosphate (cPMP). MOCS1A catalyzes the cyclization of GTP to (8S)-3',8-cyclo-7,8-dihydroguanosine 5'-triphosphate and MOCS1B catalyzes the subsequent conversion of (8S)-3',8-cyclo-7,8-dihydroguanosine 5'-triphosphate to cPMP. The chain is Molybdenum cofactor biosynthesis protein 1 (MOCS1) from Homo sapiens (Human).